A 395-amino-acid polypeptide reads, in one-letter code: Putative 8-amino-7-oxononanoate synthase (395 aa).

R23 serves as a coordination point for substrate. Residue 110–111 (GY) coordinates pyridoxal 5'-phosphate. Residue H135 coordinates substrate. Pyridoxal 5'-phosphate contacts are provided by residues S182, 207–210 (DEAH), and 239–242 (TFSK). N6-(pyridoxal phosphate)lysine is present on K242. T356 is a binding site for substrate.

It belongs to the class-II pyridoxal-phosphate-dependent aminotransferase family. BioF subfamily. In terms of assembly, homodimer. Pyridoxal 5'-phosphate serves as cofactor.

It catalyses the reaction 6-carboxyhexanoyl-[ACP] + L-alanine + H(+) = (8S)-8-amino-7-oxononanoate + holo-[ACP] + CO2. Its pathway is cofactor biosynthesis; biotin biosynthesis. Its function is as follows. Catalyzes the decarboxylative condensation of pimeloyl-[acyl-carrier protein] and L-alanine to produce 8-amino-7-oxononanoate (AON), [acyl-carrier protein], and carbon dioxide. The polypeptide is Putative 8-amino-7-oxononanoate synthase (bioF) (Bacillus cereus (strain B4264)).